The primary structure comprises 173 residues: Photosystem I assembly protein Ycf3 (173 aa).

3 TPR repeats span residues 35–68 (AYVYYRDGLSAQNAGDYAEALENYEESLKLEESP), 72–105 (SETLKNMAIIYMSNGDEDLALDTYQRALDQNSNQ), and 120–153 (GRTAQEAGLQDEADQLFDRAADVWTQAVRLYPGG).

This sequence belongs to the Ycf3 family.

It localises to the cellular thylakoid membrane. In terms of biological role, essential for the assembly of the photosystem I (PSI) complex. May act as a chaperone-like factor to guide the assembly of the PSI subunits. This Prochlorococcus marinus (strain MIT 9303) protein is Photosystem I assembly protein Ycf3.